Here is a 144-residue protein sequence, read N- to C-terminus: D-aminoacyl-tRNA deacylase (144 aa).

Positions 136–137 match the Gly-cisPro motif, important for rejection of L-amino acids motif; sequence GP.

It belongs to the DTD family. In terms of assembly, homodimer.

Its subcellular location is the cytoplasm. It carries out the reaction glycyl-tRNA(Ala) + H2O = tRNA(Ala) + glycine + H(+). It catalyses the reaction a D-aminoacyl-tRNA + H2O = a tRNA + a D-alpha-amino acid + H(+). An aminoacyl-tRNA editing enzyme that deacylates mischarged D-aminoacyl-tRNAs. Also deacylates mischarged glycyl-tRNA(Ala), protecting cells against glycine mischarging by AlaRS. Acts via tRNA-based rather than protein-based catalysis; rejects L-amino acids rather than detecting D-amino acids in the active site. By recycling D-aminoacyl-tRNA to D-amino acids and free tRNA molecules, this enzyme counteracts the toxicity associated with the formation of D-aminoacyl-tRNA entities in vivo and helps enforce protein L-homochirality. The chain is D-aminoacyl-tRNA deacylase from Haemophilus ducreyi (strain 35000HP / ATCC 700724).